The chain runs to 212 residues: Probable GTP-binding protein EngB (212 aa).

In terms of domain architecture, EngB-type G spans 23–197; it reads TGIEVAFAGR…ERILDGWFGL (175 aa). Residues 31 to 38, 58 to 62, 76 to 79, 143 to 146, and 176 to 178 contribute to the GTP site; these read GRSNAGKS, GRTQL, DLPG, TKAD, and FSS. 2 residues coordinate Mg(2+): serine 38 and threonine 60.

It belongs to the TRAFAC class TrmE-Era-EngA-EngB-Septin-like GTPase superfamily. EngB GTPase family. Mg(2+) serves as cofactor.

In terms of biological role, necessary for normal cell division and for the maintenance of normal septation. The polypeptide is Probable GTP-binding protein EngB (Alteromonas mediterranea (strain DSM 17117 / CIP 110805 / LMG 28347 / Deep ecotype)).